Consider the following 140-residue polypeptide: Large ribosomal subunit protein bL17 (140 aa).

Belongs to the bacterial ribosomal protein bL17 family. Part of the 50S ribosomal subunit. Contacts protein L32.

This is Large ribosomal subunit protein bL17 from Paramagnetospirillum magneticum (strain ATCC 700264 / AMB-1) (Magnetospirillum magneticum).